The sequence spans 603 residues: MTTAPIDNIRNFSIVAHIDHGKSTLADRLIQITGGMTDREMAGKEQVLDSMDIERERGITIKAQTVRLNYHAKDGKDYIFNLMDTPGHVDFAYEVSRSLAACEGSLLVVDASQGVEAQTLANVYHALDAGHEIVPVLNKVDLPAAEPEMIKQQIEDVIGLDASDAVMISAKTGFGVPEVLEAIVTRLPPPKGDRTASLKALLVDSWYDVYLGVVVLVRVVDGVMKKGQRIRMMGTNAAYDLERVGYFTPKMTAVDELGPGEIGFITAAIKEVADTRVGDTITDDRKPITEMLPGFKPAIPVVFCGLFPVDADDFETLRAAMGKLRLNDASFSFEMETSAALGFGFRCGFLGLLHLEIIQERLSREFDLDLIATAPSVIYKMKLNDGSEIEIHNPVDMPDVVRIQEIDEPWIEATILTPDEYLGSVLKLCQDRRGNQKELTYVGARAMVKYDLPLNEVVFDFYDRLKSVSKGYASFDYHLTDYKPADLVKMQILVNAEPVDALSMLVHRTRAEGRGRAMVEKMKELIPPHMFVIPIQAAIGGKIIARETVRALRKDVTAKCYGGDVTRKRKLLEKQKEGKKKLRQFGKVDIPQEAFIAALKVDS.

Positions 7 to 191 (DNIRNFSIVA…AIVTRLPPPK (185 aa)) constitute a tr-type G domain. GTP contacts are provided by residues 19–24 (DHGKST) and 138–141 (NKVD).

Belongs to the TRAFAC class translation factor GTPase superfamily. Classic translation factor GTPase family. LepA subfamily.

It localises to the cell inner membrane. The enzyme catalyses GTP + H2O = GDP + phosphate + H(+). Functionally, required for accurate and efficient protein synthesis under certain stress conditions. May act as a fidelity factor of the translation reaction, by catalyzing a one-codon backward translocation of tRNAs on improperly translocated ribosomes. Back-translocation proceeds from a post-translocation (POST) complex to a pre-translocation (PRE) complex, thus giving elongation factor G a second chance to translocate the tRNAs correctly. Binds to ribosomes in a GTP-dependent manner. This Rhodopseudomonas palustris (strain BisA53) protein is Elongation factor 4.